Consider the following 203-residue polypeptide: Sarcosine oxidase subunit gamma (203 aa).

Belongs to the SoxG family. In terms of assembly, heterotetramer composed of subunits alpha (SoxA), beta (SoxB), gamma (SoxG) and delta (SoxD).

It is found in the cytoplasm. It carries out the reaction sarcosine + (6S)-5,6,7,8-tetrahydrofolate + O2 = (6R)-5,10-methylene-5,6,7,8-tetrahydrofolate + glycine + H2O2. The enzyme catalyses sarcosine + O2 + H2O = formaldehyde + glycine + H2O2. Functionally, in the presence of tetrahydrofolate, catalyzes the oxidative demethylation of sarcosine to yield glycine, 5,10-methylenetetrahydrofolate and hydrogen peroxide. In the absence of tetrahydrofolate, catalyzes the oxidative demethylation of sarcosine to yield glycine, formaldehyde and hydrogen peroxide. This chain is Sarcosine oxidase subunit gamma (soxG), found in Arthrobacter sp.